The following is a 452-amino-acid chain: Tubulin alpha-2/alpha-4 chain (452 aa).

Q11 lines the GTP pocket. K40 is modified (N6-acetyllysine). GTP contacts are provided by E71, S140, G144, T145, T179, N206, and N228. Residue E71 participates in Mg(2+) binding. Residue E254 is part of the active site. The interval 432 to 452 (YEEVGVDSVEGEGEEEGGEEY) is disordered.

This sequence belongs to the tubulin family. As to quaternary structure, dimer of alpha and beta chains. A typical microtubule is a hollow water-filled tube with an outer diameter of 25 nm and an inner diameter of 15 nM. Alpha-beta heterodimers associate head-to-tail to form protofilaments running lengthwise along the microtubule wall with the beta-tubulin subunit facing the microtubule plus end conferring a structural polarity. Microtubules usually have 13 protofilaments but different protofilament numbers can be found in some organisms and specialized cells. It depends on Mg(2+) as a cofactor. In terms of processing, undergoes a tyrosination/detyrosination cycle, the cyclic removal and re-addition of a C-terminal tyrosine residue by the enzymes tubulin tyrosine carboxypeptidase (TTCP) and tubulin tyrosine ligase (TTL), respectively. Acetylation of alpha chains at Lys-40 stabilizes microtubules and affects affinity and processivity of microtubule motors. This modification has a role in multiple cellular functions, ranging from cell motility, cell cycle progression or cell differentiation to intracellular trafficking and signaling.

Its subcellular location is the cytoplasm. The protein resides in the cytoskeleton. It catalyses the reaction GTP + H2O = GDP + phosphate + H(+). Tubulin is the major constituent of microtubules, a cylinder consisting of laterally associated linear protofilaments composed of alpha- and beta-tubulin heterodimers. Microtubules grow by the addition of GTP-tubulin dimers to the microtubule end, where a stabilizing cap forms. Below the cap, tubulin dimers are in GDP-bound state, owing to GTPase activity of alpha-tubulin. The polypeptide is Tubulin alpha-2/alpha-4 chain (TUB2) (Patella vulgata (Common limpet)).